The primary structure comprises 321 residues: L-carnitine dehydrogenase (321 aa).

14 to 19 (GSGVIG) lines the NAD(+) pocket.

This sequence belongs to the 3-hydroxyacyl-CoA dehydrogenase family. L-carnitine dehydrogenase subfamily. Homodimer.

The protein localises to the cytoplasm. It catalyses the reaction carnitine + NAD(+) = 3-dehydrocarnitine + NADH + H(+). It functions in the pathway amine and polyamine metabolism; carnitine metabolism. In terms of biological role, catalyzes the NAD(+)-dependent oxidation of L-carnitine to 3-dehydrocarnitine. This Pseudomonas putida (strain ATCC 47054 / DSM 6125 / CFBP 8728 / NCIMB 11950 / KT2440) protein is L-carnitine dehydrogenase.